A 263-amino-acid chain; its full sequence is MDRKIVIPGQLLSEKKEMAGPGTYVKNGNIYSLLYGIANFKGRVSVVPFSGKYIPSRKDFIIVNVIDVTPSNWIMETGSPYDGLLHVSEFPKRVDSSEMRKFMDVGDCVIVRVKDVSKAMKVELSMREQGSRALSKGRIIEVVPSKVPRVIGHGGSMVSILKKESNCDVFVGKNGRIWINGKDKDMDRLTTAIEMIESESHMSGLTDKVGMFLRGEPEGTEGSDEEQLVDEEVAGVSLEDDDVTEETSRKVDVLLDNDTDETN.

The S1 motif domain maps to 51–127; the sequence is GKYIPSRKDF…KAMKVELSMR (77 aa). Residues 135-196 form the KH domain; it reads SKGRIIEVVP…DRLTTAIEMI (62 aa). The interval 213-263 is disordered; that stretch reads LRGEPEGTEGSDEEQLVDEEVAGVSLEDDDVTEETSRKVDVLLDNDTDETN. Over residues 218–245 the composition is skewed to acidic residues; it reads EGTEGSDEEQLVDEEVAGVSLEDDDVTE.

This sequence belongs to the RRP4 family. Component of the archaeal exosome complex. Forms a trimer of Rrp4 and/or Csl4 subunits. The trimer associates with a hexameric ring-like arrangement composed of 3 Rrp41-Rrp42 heterodimers.

The protein resides in the cytoplasm. Non-catalytic component of the exosome, which is a complex involved in RNA degradation. Increases the RNA binding and the efficiency of RNA degradation. Confers strong poly(A) specificity to the exosome. In Methanococcoides burtonii (strain DSM 6242 / NBRC 107633 / OCM 468 / ACE-M), this protein is Exosome complex component Rrp4.